Here is a 77-residue protein sequence, read N- to C-terminus: Acyl carrier protein (77 aa).

The Carrier domain occupies 1-76 (MAVFDEVKDV…DVVNYIDGLK (76 aa)). O-(pantetheine 4'-phosphoryl)serine is present on Ser36.

It belongs to the acyl carrier protein (ACP) family. In terms of processing, 4'-phosphopantetheine is transferred from CoA to a specific serine of apo-ACP by AcpS. This modification is essential for activity because fatty acids are bound in thioester linkage to the sulfhydryl of the prosthetic group.

It localises to the cytoplasm. Its pathway is lipid metabolism; fatty acid biosynthesis. Carrier of the growing fatty acid chain in fatty acid biosynthesis. The chain is Acyl carrier protein from Campylobacter fetus subsp. fetus (strain 82-40).